The primary structure comprises 124 residues: Small ribosomal subunit protein uS12 (124 aa).

The disordered stretch occupies residues 1–29 (MATINQLVRKGRKRRVAKSNVPALEASPQ). Asp-89 bears the 3-methylthioaspartic acid mark. The interval 101–124 (AADTAGVDKRRQGRSKYGAKRPKS) is disordered. Over residues 111–124 (RQGRSKYGAKRPKS) the composition is skewed to basic residues.

It belongs to the universal ribosomal protein uS12 family. As to quaternary structure, part of the 30S ribosomal subunit. Contacts proteins S8 and S17. May interact with IF1 in the 30S initiation complex.

Its function is as follows. With S4 and S5 plays an important role in translational accuracy. Interacts with and stabilizes bases of the 16S rRNA that are involved in tRNA selection in the A site and with the mRNA backbone. Located at the interface of the 30S and 50S subunits, it traverses the body of the 30S subunit contacting proteins on the other side and probably holding the rRNA structure together. The combined cluster of proteins S8, S12 and S17 appears to hold together the shoulder and platform of the 30S subunit. In Alkalilimnicola ehrlichii (strain ATCC BAA-1101 / DSM 17681 / MLHE-1), this protein is Small ribosomal subunit protein uS12.